The primary structure comprises 712 residues: Eukaryotic translation initiation factor 3 subunit B (712 aa).

N-acetylmethionine is present on M1. One can recognise an RRM domain in the interval 56-143 (NIIVVDHLPV…HIFAVNMFDD (88 aa)).

This sequence belongs to the eIF-3 subunit B family. In terms of assembly, component of the eukaryotic translation initiation factor 3 (eIF-3) complex, which is composed of at least 13 different subunits. Binds to the translation initiation factor TIF3H1.

It localises to the cytoplasm. Functionally, RNA-binding component of the eukaryotic translation initiation factor 3 (eIF-3) complex, which is involved in protein synthesis of a specialized repertoire of mRNAs and, together with other initiation factors, stimulates binding of mRNA and methionyl-tRNAi to the 40S ribosome. The eIF-3 complex specifically targets and initiates translation of a subset of mRNAs involved in cell proliferation. This chain is Eukaryotic translation initiation factor 3 subunit B (TIF3B1), found in Arabidopsis thaliana (Mouse-ear cress).